Here is a 189-residue protein sequence, read N- to C-terminus: Large ribosomal subunit protein uL5 (189 aa).

It belongs to the universal ribosomal protein uL5 family. Part of the 50S ribosomal subunit; part of the 5S rRNA/L5/L18/L25 subcomplex. Contacts the 5S rRNA and the P site tRNA. Forms a bridge to the 30S subunit in the 70S ribosome.

Its function is as follows. This is one of the proteins that bind and probably mediate the attachment of the 5S RNA into the large ribosomal subunit, where it forms part of the central protuberance. In the 70S ribosome it contacts protein S13 of the 30S subunit (bridge B1b), connecting the 2 subunits; this bridge is implicated in subunit movement. Contacts the P site tRNA; the 5S rRNA and some of its associated proteins might help stabilize positioning of ribosome-bound tRNAs. The sequence is that of Large ribosomal subunit protein uL5 from Salinispora tropica (strain ATCC BAA-916 / DSM 44818 / JCM 13857 / NBRC 105044 / CNB-440).